A 258-amino-acid chain; its full sequence is Imidazole glycerol phosphate synthase subunit HisF (258 aa).

Residues aspartate 12 and aspartate 131 contribute to the active site.

Belongs to the HisA/HisF family. As to quaternary structure, heterodimer of HisH and HisF.

It localises to the cytoplasm. The catalysed reaction is 5-[(5-phospho-1-deoxy-D-ribulos-1-ylimino)methylamino]-1-(5-phospho-beta-D-ribosyl)imidazole-4-carboxamide + L-glutamine = D-erythro-1-(imidazol-4-yl)glycerol 3-phosphate + 5-amino-1-(5-phospho-beta-D-ribosyl)imidazole-4-carboxamide + L-glutamate + H(+). It functions in the pathway amino-acid biosynthesis; L-histidine biosynthesis; L-histidine from 5-phospho-alpha-D-ribose 1-diphosphate: step 5/9. Its function is as follows. IGPS catalyzes the conversion of PRFAR and glutamine to IGP, AICAR and glutamate. The HisF subunit catalyzes the cyclization activity that produces IGP and AICAR from PRFAR using the ammonia provided by the HisH subunit. This chain is Imidazole glycerol phosphate synthase subunit HisF, found in Arthrobacter sp. (strain FB24).